The sequence spans 1358 residues: DNA-directed RNA polymerase subunit beta (1358 aa).

The protein belongs to the RNA polymerase beta chain family. In terms of assembly, the RNAP catalytic core consists of 2 alpha, 1 beta, 1 beta' and 1 omega subunit. When a sigma factor is associated with the core the holoenzyme is formed, which can initiate transcription.

The enzyme catalyses RNA(n) + a ribonucleoside 5'-triphosphate = RNA(n+1) + diphosphate. DNA-dependent RNA polymerase catalyzes the transcription of DNA into RNA using the four ribonucleoside triphosphates as substrates. The sequence is that of DNA-directed RNA polymerase subunit beta from Francisella philomiragia subsp. philomiragia (strain ATCC 25017 / CCUG 19701 / FSC 153 / O#319-036).